The chain runs to 70 residues: Turripeptide OL179 (70 aa).

Residues 1-21 form the signal peptide; the sequence is MMAKQVVVLLALLLLLPIVTA. The propeptide occupies 22–32; the sequence is SMGDASGRTGR.

As to expression, expressed by the venom duct.

The protein localises to the secreted. Its function is as follows. Acts as a neurotoxin by inhibiting an ion channel. This Iotyrris olangoensis (Sea snail) protein is Turripeptide OL179.